Here is a 355-residue protein sequence, read N- to C-terminus: Zinc transporter ZIP13 homolog (355 aa).

Asn-4 carries N-linked (GlcNAc...) asparagine glycosylation. The next 3 helical transmembrane spans lie at 37–57 (VFSL…LIII), 79–99 (VLLS…LLPE), and 118–138 (LWVL…SGYA). Residue Asn-218 is glycosylated (N-linked (GlcNAc...) asparagine). 2 helical membrane-spanning segments follow: residues 273–293 (LLTA…SGVT) and 301–321 (SWIM…TVLP).

Belongs to the ZIP transporter (TC 2.A.5) family. KE4/Catsup subfamily.

Its subcellular location is the basolateral cell membrane. The protein resides in the golgi apparatus membrane. In terms of biological role, involved in zinc transport and homeostasis. In Drosophila melanogaster (Fruit fly), this protein is Zinc transporter ZIP13 homolog (Zip99C).